We begin with the raw amino-acid sequence, 489 residues long: Probable cytosol aminopeptidase (489 aa).

The Mn(2+) site is built by Lys254 and Asp259. Residue Lys266 is part of the active site. Residues Asp277, Asp336, and Glu338 each coordinate Mn(2+). Residue Arg340 is part of the active site.

It belongs to the peptidase M17 family. The cofactor is Mn(2+).

The protein resides in the cytoplasm. It carries out the reaction Release of an N-terminal amino acid, Xaa-|-Yaa-, in which Xaa is preferably Leu, but may be other amino acids including Pro although not Arg or Lys, and Yaa may be Pro. Amino acid amides and methyl esters are also readily hydrolyzed, but rates on arylamides are exceedingly low.. The catalysed reaction is Release of an N-terminal amino acid, preferentially leucine, but not glutamic or aspartic acids.. Its function is as follows. Presumably involved in the processing and regular turnover of intracellular proteins. Catalyzes the removal of unsubstituted N-terminal amino acids from various peptides. This is Probable cytosol aminopeptidase from Cereibacter sphaeroides (strain ATCC 17025 / ATH 2.4.3) (Rhodobacter sphaeroides).